A 239-amino-acid chain; its full sequence is Tetraspanin-9 (239 aa).

Topologically, residues 1 to 13 (MARGCLCCLKYTM) are cytoplasmic. A helical transmembrane segment spans residues 14–34 (FLFNLIFWLCGCGLLGVGIWL). Residues 35–55 (SVSQGNFATFSPSFPSLSAAN) are Extracellular-facing. Residues 56–76 (LVIAIGTIVMVTGFLGCLGAI) traverse the membrane as a helical segment. Over 77–85 (KENKCLLLS) the chain is Cytoplasmic. The chain crosses the membrane as a helical span at residues 86–106 (FFIVLLIILLAELILIILFFV). Residues 107–203 (YMDKVNENAK…VKLWFDDNKH (97 aa)) lie on the Extracellular side of the membrane. Residue Asn-180 is glycosylated (N-linked (GlcNAc...) asparagine). The helical transmembrane segment at 204–224 (VLGTVGMCILIMQILGMAFSM) threads the bilayer. Over 225–239 (TLFQHIHRTGKKYDA) the chain is Cytoplasmic.

It belongs to the tetraspanin (TM4SF) family. Found in a complex with GP6. In terms of processing, glycosylated. Strongly expressed in megakaryocytes, platelets and lung. Weakly expressed in bone marrow, brain and kidney (at protein level).

It is found in the membrane. This is Tetraspanin-9 (Tspan9) from Mus musculus (Mouse).